The primary structure comprises 636 residues: Threonine--tRNA ligase (636 aa).

The 61-residue stretch at 1-61 folds into the TGS domain; the sequence is MLKITLKDGS…NENCEVEILS (61 aa). The catalytic stretch occupies residues 244–534; that stretch reads EHRKLGKELD…LIEHYEGKFP (291 aa). Residues Cys335, His386, and His511 each coordinate Zn(2+).

It belongs to the class-II aminoacyl-tRNA synthetase family. As to quaternary structure, homodimer. Requires Zn(2+) as cofactor.

Its subcellular location is the cytoplasm. The enzyme catalyses tRNA(Thr) + L-threonine + ATP = L-threonyl-tRNA(Thr) + AMP + diphosphate + H(+). In terms of biological role, catalyzes the attachment of threonine to tRNA(Thr) in a two-step reaction: L-threonine is first activated by ATP to form Thr-AMP and then transferred to the acceptor end of tRNA(Thr). Also edits incorrectly charged L-seryl-tRNA(Thr). This is Threonine--tRNA ligase from Natranaerobius thermophilus (strain ATCC BAA-1301 / DSM 18059 / JW/NM-WN-LF).